Here is a 374-residue protein sequence, read N- to C-terminus: Proteinase-activated receptor 3 (374 aa).

Residues 1–21 (MKALIFAAAGLLLLLPTFCQS) form the signal peptide. The propeptide at 22–38 (GMENDTNNLAKPTLPIK) is removed for receptor activation. N-linked (GlcNAc...) asparagine glycosylation is found at Asn-25 and Asn-82. Topologically, residues 39–94 (TFRGAPPNSFEEFPFSALEGWTGATITVKIKCPEESASHLHVKNATMGYLTSSLST) are extracellular. A helical transmembrane segment spans residues 95 to 120 (KLIPAIYLLVFVVGVPANAVTLWMLF). The Cytoplasmic portion of the chain corresponds to 121–128 (FRTRSICT). A helical membrane pass occupies residues 129–148 (TVFYTNLAIADFLFCVTLPF). Residues 149 to 167 (KIAYHLNGNNWVFGEVLCR) lie on the Extracellular side of the membrane. A disulfide bridge links Cys-166 with Cys-245. The chain crosses the membrane as a helical span at residues 168–189 (ATTVIFYGNMYCSILLLACISI). Residues 190 to 206 (NRYLAIVHPFTYRGLPK) lie on the Cytoplasmic side of the membrane. Residues 207–230 (HTYALVTCGLVWATVFLYMLPFFI) form a helical membrane-spanning segment. The Extracellular portion of the chain corresponds to 231-260 (LKQEYYLVQPDITTCHDVHNTCESSSPFQL). Residues 261 to 280 (YYFISLAFFGFLIPFVLIIY) traverse the membrane as a helical segment. Residues 281–297 (CYAAIIRTLNAYDHRWL) lie on the Cytoplasmic side of the membrane. The chain crosses the membrane as a helical span at residues 298-322 (WYVKASLLILVIFTICFAPSNIILI). Over 323–336 (IHHANYYYNNTDGL) the chain is Extracellular. An N-linked (GlcNAc...) asparagine glycan is attached at Asn-331. The chain crosses the membrane as a helical span at residues 337–361 (YFIYLIALCLGSLNSCLDPFLYFLM). Over 362–374 (SKTRNHSTAYLTK) the chain is Cytoplasmic.

Belongs to the G-protein coupled receptor 1 family. In terms of assembly, interacts with INSC/inscuteable and probably GPSM2. In terms of processing, a proteolytic cleavage generates a new N-terminus that functions as a tethered ligand. As to expression, highest expression in the megakaryocytes of the bone marrow, lower in mature megakaryocytes, in platelets and in a variety of other tissues such as heart and gut.

It is found in the cell membrane. Its function is as follows. Receptor for activated thrombin coupled to G proteins that stimulate phosphoinositide hydrolysis. This is Proteinase-activated receptor 3 (F2RL2) from Homo sapiens (Human).